The following is a 161-amino-acid chain: Allophycocyanin alpha-B chain (161 aa).

Asn71 bears the N4-methylasparagine mark. A (2R,3E)-phycocyanobilin-binding site is contributed by Cys81.

It belongs to the phycobiliprotein family. Contains one covalently linked bilin chromophore.

The protein localises to the plastid. It is found in the chloroplast thylakoid membrane. Allophycocyanin is a photosynthetic bile pigment-protein complex with maximum absorption at approximately 650 nanometers. The sequence is that of Allophycocyanin alpha-B chain (apcD) from Pyropia yezoensis (Susabi-nori).